Consider the following 810-residue polypeptide: Phenylalanine--tRNA ligase beta subunit (810 aa).

A tRNA-binding domain is found at 39–151 (RTWAAGVVVG…AGLQAGQPVG (113 aa)). The B5 domain occupies 408–494 (EPEHSITLRL…RLYGYDNFGE (87 aa)). Mg(2+)-binding residues include Asp472, Asp478, Glu481, and Glu482. Positions 716–809 (SSFPASDRDL…LVERFRVTLR (94 aa)) constitute an FDX-ACB domain.

It belongs to the phenylalanyl-tRNA synthetase beta subunit family. Type 1 subfamily. In terms of assembly, tetramer of two alpha and two beta subunits. Mg(2+) serves as cofactor.

It localises to the cytoplasm. The enzyme catalyses tRNA(Phe) + L-phenylalanine + ATP = L-phenylalanyl-tRNA(Phe) + AMP + diphosphate + H(+). In Synechococcus elongatus (strain ATCC 33912 / PCC 7942 / FACHB-805) (Anacystis nidulans R2), this protein is Phenylalanine--tRNA ligase beta subunit (pheT).